A 293-amino-acid polypeptide reads, in one-letter code: Protease HtpX homolog (293 aa).

2 consecutive transmembrane segments (helical) span residues 4–24 (IFLF…TLRV) and 40–60 (SLLI…LLIS). His-146 provides a ligand contact to Zn(2+). Residue Glu-147 is part of the active site. His-150 contributes to the Zn(2+) binding site. 2 helical membrane-spanning segments follow: residues 161-181 (LIQG…GYFI) and 197-217 (FITV…IVAW). Residue Glu-223 participates in Zn(2+) binding.

It belongs to the peptidase M48B family. It depends on Zn(2+) as a cofactor.

The protein localises to the cell inner membrane. This is Protease HtpX homolog from Bordetella petrii (strain ATCC BAA-461 / DSM 12804 / CCUG 43448).